Consider the following 455-residue polypeptide: ATP-dependent protease ATPase subunit HslU (455 aa).

Residues isoleucine 19 and 61-66 contribute to the ATP site; that span reads GVGKTE. Positions 144 to 163 are disordered; the sequence is ESKVGFANEPAEDAASKKEK. 3 residues coordinate ATP: aspartate 268, glutamate 333, and arginine 405.

Belongs to the ClpX chaperone family. HslU subfamily. A double ring-shaped homohexamer of HslV is capped on each side by a ring-shaped HslU homohexamer. The assembly of the HslU/HslV complex is dependent on binding of ATP.

It localises to the cytoplasm. Functionally, ATPase subunit of a proteasome-like degradation complex; this subunit has chaperone activity. The binding of ATP and its subsequent hydrolysis by HslU are essential for unfolding of protein substrates subsequently hydrolyzed by HslV. HslU recognizes the N-terminal part of its protein substrates and unfolds these before they are guided to HslV for hydrolysis. The sequence is that of ATP-dependent protease ATPase subunit HslU from Francisella tularensis subsp. holarctica (strain FTNF002-00 / FTA).